Consider the following 1095-residue polypeptide: MNRSGISKKRPPPSNTPPPAGKHRATGDSTPSPAIGTLDDEFMMEEDVFLDETLLYGDEDEESLILRDIEERESRSSAWARPPLSPAYLSNSQSIIFQQLEIDSIIAESHKELLPGSSGQAPIIRMFGVTREGNSVCCFVHGFEPYFYIACPPGMGPDDISNFHQSLEGRMRESNKNAKVPKFVKRIEMVQKRSIMYYQQQKSQTFLKITVALPTMVASCRGILDRGLQIDGLGMKSFQTYESNILFVLRFMVDCDIVGGNWIEVPTGKYKKNARTLSYCQLEFHCLYSDLISHAAEGEYSKMAPFRVLSFDIECAGRKGHFPEAKHDPVIQIANLVTLQGEDHPFVRNVMTLKSCAPIVGVDVMSFETEREVLLAWRDLIRDVDPDIIIGYNICKFDLPYLIERAATLGIEEFPLLGRVKNSRVRVRDSTFSSRQQGIRESKETTIEGRFQFDLIQAIHRDHKLSSYSLNSVSAHFLSEQKEDVHHSIITDLQNGNAETRRRLAVYCLKDAYLPQRLLDKLMFIYNYVEMARVTGVPISFLLARGQSIKVLSQLLRKGKQKNLVLPNAKQSGSEQGTYEGATVLEARTGFYEKPIATLDFASLYPSIMMAYNLCYCTLVTPEDVRKLNLPPEHVTKTPSGETFVKQTLQKGILPEILEELLTARKRAKADLKEAKDPLEKAVLDGRQLALKISANSVYGFTGATVGQLPCLEISSSVTSYGRQMIEQTKKLVEDKFTTLGGYQYNAEVIYGDTDSVMVQFGVSDVEAAMTLGREAAEHISGTFIKPIKLEFEKVYFPYLLINKKRYAGLLWTNPQQFDKMDTKGIETVRRDNCLLVKNLVTESLNKILIDRDVPGAAENVKKTISDLLMNRIDLSLLVITKGLTKTGDDYEVKSAHGELAERMRKRDAATAPNVGDRVPYVIIKAAKGAKAYERSEDPIYVLQNNIPIDPNYYLENQISKPLLRIFEPVLKNASKELLHGSHTRSISITTPSNSGIMKFAKKQLSCVGCKVPISNGTLCASCKGREAELYCKNVSQVAELEEVFGRLWTQCQECQGSLHQDVLCTSRDCPIFYRRMKAQKDMAVARQQLDRWSF.

Residues 1 to 11 (MNRSGISKKRP) are compositionally biased toward basic residues. Residues 1–37 (MNRSGISKKRPPPSNTPPPAGKHRATGDSTPSPAIGT) are disordered. Residues Cys-1007, Cys-1010, Cys-1020, and Cys-1023 each coordinate Zn(2+). The CysA-type zinc finger occupies 1007–1023 (CVGCKVPISNGTLCASC). Residues Cys-1052, Cys-1055, Cys-1065, and Cys-1070 each contribute to the [4Fe-4S] cluster site. The short motif at 1052–1070 (CQECQGSLHQDVLCTSRDC) is the CysB motif element.

This sequence belongs to the DNA polymerase type-B family. Heterodimer with subunits of 125 kDa and 50 kDa. The 125 kDa subunit contains the polymerase active site and most likely the active site for the 3'-5' exonuclease activity. [4Fe-4S] cluster serves as cofactor.

It is found in the nucleus. It carries out the reaction DNA(n) + a 2'-deoxyribonucleoside 5'-triphosphate = DNA(n+1) + diphosphate. Its function is as follows. This polymerase possesses two enzymatic activities: DNA synthesis (polymerase) and an exonucleolytic activity that degrades single-stranded DNA in the 3'- to 5'-direction. This chain is DNA polymerase delta catalytic subunit (POLD1), found in Arabidopsis thaliana (Mouse-ear cress).